The following is a 276-amino-acid chain: MKFGIVARRDREEALKLAYRVYDFLKVNNYEVYVDEEAYIHFPHFSSEDVLSLKKMDVDMIIAIGGDGTVLRVEHNTSKDIPILAVNMGTLGFLAEIEPAETFFAISRILEGDYFIDERMKIRVFVEDVSIPDALNDVVILTSIPGKVTHLKYYVDGELAEDIRADGLIISTPTGSTAYALSAGGPLVDPRLHAILLVPLAPVALTARPLVVPDCSSIEIEVLTEREIVLTVDGQFYTQLPSNLKIRVEKSPRKTKFVRFSERIYPKYTLKIKKKF.

Asp-67 serves as the catalytic Proton acceptor. Residues 67 to 68 (DG), Arg-72, 136 to 137 (ND), Lys-147, Arg-164, Asp-166, 177 to 182 (TAYALS), Ala-201, and Gln-235 each bind NAD(+).

This sequence belongs to the NAD kinase family. Requires a divalent metal cation as cofactor.

It is found in the cytoplasm. The catalysed reaction is NAD(+) + ATP = ADP + NADP(+) + H(+). In terms of biological role, involved in the regulation of the intracellular balance of NAD and NADP, and is a key enzyme in the biosynthesis of NADP. Catalyzes specifically the phosphorylation on 2'-hydroxyl of the adenosine moiety of NAD to yield NADP. This Thermococcus sibiricus (strain DSM 12597 / MM 739) protein is NAD kinase.